Reading from the N-terminus, the 330-residue chain is Putative heme-binding peroxidase (330 aa).

The Proton acceptor role is filled by His38. Residue His162 coordinates heme b. Trp178 serves as the catalytic Tryptophan radical intermediate. The interval 286–330 (GEYKSAPQKSPVPGAPGAGKDGEANPLARQNERAHGQAQHALAKL) is disordered.

This sequence belongs to the peroxidase family. Cytochrome c peroxidase subfamily. It depends on heme b as a cofactor.

Functionally, destroys radicals which are normally produced within the cells and which are toxic to biological systems. The chain is Putative heme-binding peroxidase (CCP2) from Mycosarcoma maydis (Corn smut fungus).